The sequence spans 290 residues: Shikimate dehydrogenase (NADP(+)) (290 aa).

Shikimate-binding positions include 19-21 (SLS) and Ser65. The Proton acceptor role is filled by Lys69. Residues Asn90 and Asp105 each coordinate shikimate. NADP(+) contacts are provided by residues 129–133 (GAGGA) and Leu231. Tyr233 serves as a coordination point for shikimate. Residue Gly254 participates in NADP(+) binding.

The protein belongs to the shikimate dehydrogenase family. In terms of assembly, homodimer.

It carries out the reaction shikimate + NADP(+) = 3-dehydroshikimate + NADPH + H(+). It functions in the pathway metabolic intermediate biosynthesis; chorismate biosynthesis; chorismate from D-erythrose 4-phosphate and phosphoenolpyruvate: step 4/7. Involved in the biosynthesis of the chorismate, which leads to the biosynthesis of aromatic amino acids. Catalyzes the reversible NADPH linked reduction of 3-dehydroshikimate (DHSA) to yield shikimate (SA). The chain is Shikimate dehydrogenase (NADP(+)) from Latilactobacillus sakei subsp. sakei (strain 23K) (Lactobacillus sakei subsp. sakei).